Reading from the N-terminus, the 40-residue chain is Photosystem II reaction center protein J (40 aa).

Residues 8–28 (IPLWLIGTVTGIPVIGLIGIF) form a helical membrane-spanning segment.

This sequence belongs to the PsbJ family. PSII is composed of 1 copy each of membrane proteins PsbA, PsbB, PsbC, PsbD, PsbE, PsbF, PsbH, PsbI, PsbJ, PsbK, PsbL, PsbM, PsbT, PsbX, PsbY, PsbZ, Psb30/Ycf12, at least 3 peripheral proteins of the oxygen-evolving complex and a large number of cofactors. It forms dimeric complexes.

Its subcellular location is the plastid. It is found in the chloroplast thylakoid membrane. In terms of biological role, one of the components of the core complex of photosystem II (PSII). PSII is a light-driven water:plastoquinone oxidoreductase that uses light energy to abstract electrons from H(2)O, generating O(2) and a proton gradient subsequently used for ATP formation. It consists of a core antenna complex that captures photons, and an electron transfer chain that converts photonic excitation into a charge separation. This Vitis vinifera (Grape) protein is Photosystem II reaction center protein J.